The following is a 340-amino-acid chain: 4-amino-5-hydroxymethyl-2-methylpyrimidine phosphate synthase THI11 (340 aa).

Residue Lys62 is modified to N6-(pyridoxal phosphate)lysine. The active site involves His66. 115-118 (GEFG) is a binding site for pyridoxal 5'-phosphate. Residues 195 to 199 (CCCFC) carry the CCCFC; essential for catalytic activity, may be the site of iron coordination motif.

It belongs to the NMT1/THI5 family. In terms of assembly, homodimer. The cofactor is Fe cation.

The enzyme catalyses N(6)-(pyridoxal phosphate)-L-lysyl-[4-amino-5-hydroxymethyl-2-methylpyrimidine phosphate synthase] + L-histidyl-[4-amino-5-hydroxymethyl-2-methylpyrimidine phosphate synthase] + 2 Fe(3+) + 4 H2O = L-lysyl-[4-amino-5-hydroxymethyl-2-methylpyrimidine phosphate synthase] + (2S)-2-amino-5-hydroxy-4-oxopentanoyl-[4-amino-5-hydroxymethyl-2-methylpyrimidine phosphate synthase] + 4-amino-2-methyl-5-(phosphooxymethyl)pyrimidine + 3-oxopropanoate + 2 Fe(2+) + 2 H(+). The protein operates within cofactor biosynthesis; thiamine diphosphate biosynthesis. Responsible for the formation of the pyrimidine heterocycle in the thiamine biosynthesis pathway. Catalyzes the formation of hydroxymethylpyrimidine phosphate (HMP-P) from histidine and pyridoxal phosphate (PLP). The protein uses PLP and the active site histidine to form HMP-P, generating an inactive enzyme. The enzyme can only undergo a single turnover, which suggests it is a suicide enzyme. This Saccharomyces cerevisiae (strain ATCC 204508 / S288c) (Baker's yeast) protein is 4-amino-5-hydroxymethyl-2-methylpyrimidine phosphate synthase THI11.